The following is a 237-amino-acid chain: Ribonuclease PH (237 aa).

Phosphate is bound by residues Arg-86 and 124–126; that span reads GTR.

It belongs to the RNase PH family. In terms of assembly, homohexameric ring arranged as a trimer of dimers.

The enzyme catalyses tRNA(n+1) + phosphate = tRNA(n) + a ribonucleoside 5'-diphosphate. Its function is as follows. Phosphorolytic 3'-5' exoribonuclease that plays an important role in tRNA 3'-end maturation. Removes nucleotide residues following the 3'-CCA terminus of tRNAs; can also add nucleotides to the ends of RNA molecules by using nucleoside diphosphates as substrates, but this may not be physiologically important. Probably plays a role in initiation of 16S rRNA degradation (leading to ribosome degradation) during starvation. The chain is Ribonuclease PH from Methylobacterium radiotolerans (strain ATCC 27329 / DSM 1819 / JCM 2831 / NBRC 15690 / NCIMB 10815 / 0-1).